The following is a 233-amino-acid chain: Octanoyltransferase (233 aa).

Residues 36-211 enclose the BPL/LPL catalytic domain; sequence DTTPDEIWLV…EFTRQLGYPT (176 aa). Residues 75-82, 142-144, and 155-157 contribute to the substrate site; these read RGGQVTYH, SLG, and GLA. Residue cysteine 173 is the Acyl-thioester intermediate of the active site.

This sequence belongs to the LipB family.

It localises to the cytoplasm. It carries out the reaction octanoyl-[ACP] + L-lysyl-[protein] = N(6)-octanoyl-L-lysyl-[protein] + holo-[ACP] + H(+). The protein operates within protein modification; protein lipoylation via endogenous pathway; protein N(6)-(lipoyl)lysine from octanoyl-[acyl-carrier-protein]: step 1/2. Functionally, catalyzes the transfer of endogenously produced octanoic acid from octanoyl-acyl-carrier-protein onto the lipoyl domains of lipoate-dependent enzymes. Lipoyl-ACP can also act as a substrate although octanoyl-ACP is likely to be the physiological substrate. The chain is Octanoyltransferase from Yersinia pestis bv. Antiqua (strain Antiqua).